The sequence spans 361 residues: Mannose-1-phosphate guanyltransferase (361 aa).

At Thr153 the chain carries Phosphothreonine. A Glycyl lysine isopeptide (Lys-Gly) (interchain with G-Cter in ubiquitin) cross-link involves residue Lys244.

This sequence belongs to the transferase hexapeptide repeat family.

The protein resides in the cytoplasm. It catalyses the reaction alpha-D-mannose 1-phosphate + GTP + H(+) = GDP-alpha-D-mannose + diphosphate. The protein operates within nucleotide-sugar biosynthesis; GDP-alpha-D-mannose biosynthesis; GDP-alpha-D-mannose from alpha-D-mannose 1-phosphate (GTP route): step 1/1. Functionally, involved in cell wall synthesis where it is required for glycosylation. Involved in cell cycle progression through cell-size checkpoint. The protein is Mannose-1-phosphate guanyltransferase (PSA1) of Saccharomyces cerevisiae (strain ATCC 204508 / S288c) (Baker's yeast).